The following is a 316-amino-acid chain: Putative metal-binding protein TP_0034 (316 aa).

The first 19 residues, 1 to 19 (MQRCSVVAALAGVVFLAQA), serve as a signal peptide directing secretion. A divalent metal cation-binding residues include histidine 68, histidine 146, and histidine 210.

This sequence belongs to the bacterial solute-binding protein 9 family.

It localises to the periplasm. Part of an ATP-binding cassette (ABC) transport system involved in metal import. Binds a metal with high affinity and specificity and delivers it to the membrane permease for translocation into the cytoplasm. The protein is Putative metal-binding protein TP_0034 of Treponema pallidum (strain Nichols).